The chain runs to 149 residues: Protein GR6 (149 aa).

In terms of tissue distribution, expressed in fetus (aged from 7 to 8 weeks). Weakly expressed in lymphocytes.

The chain is Protein GR6 from Homo sapiens (Human).